We begin with the raw amino-acid sequence, 146 residues long: Large ribosomal subunit protein uL15 (146 aa).

Positions 1–13 (MKLHELKPAEGSR) are enriched in basic and acidic residues. The disordered stretch occupies residues 1–57 (MKLHELKPAEGSRKVRNRVGRGTSSGNGKTSGRGQKGQKARSGVGLRPGFEGGQTPL). Residues 23-35 (TSSGNGKTSGRGQ) show a composition bias toward gly residues.

Belongs to the universal ribosomal protein uL15 family. As to quaternary structure, part of the 50S ribosomal subunit.

Its function is as follows. Binds to the 23S rRNA. The chain is Large ribosomal subunit protein uL15 from Streptococcus thermophilus (strain ATCC BAA-491 / LMD-9).